A 455-amino-acid chain; its full sequence is Bifunctional protein GlmU (455 aa).

The tract at residues 1–226 is pyrophosphorylase; it reads MGLSVVILAA…EFEILGVNDR (226 aa). UDP-N-acetyl-alpha-D-glucosamine contacts are provided by residues 8–11, Lys-22, Gln-73, 78–79, 99–101, Gly-136, Glu-151, Asn-166, and Asn-224; these read LAAG, GT, and YGD. A Mg(2+)-binding site is contributed by Asp-101. Mg(2+) is bound at residue Asn-224. A linker region spans residues 227-247; it reads TQLASLERVWQRNVAEKIMAK. Residues 248–455 form an N-acetyltransferase region; the sequence is GVSIADPNRF…WQRSVKKTDK (208 aa). UDP-N-acetyl-alpha-D-glucosamine-binding residues include Arg-330 and Lys-348. Residue His-360 is the Proton acceptor of the active site. 2 residues coordinate UDP-N-acetyl-alpha-D-glucosamine: Tyr-363 and Asn-374. Acetyl-CoA contacts are provided by residues Ala-377, 383–384, Ser-402, Ala-420, and Arg-437; that span reads NY.

In the N-terminal section; belongs to the N-acetylglucosamine-1-phosphate uridyltransferase family. It in the C-terminal section; belongs to the transferase hexapeptide repeat family. As to quaternary structure, homotrimer. Mg(2+) serves as cofactor.

The protein resides in the cytoplasm. It carries out the reaction alpha-D-glucosamine 1-phosphate + acetyl-CoA = N-acetyl-alpha-D-glucosamine 1-phosphate + CoA + H(+). It catalyses the reaction N-acetyl-alpha-D-glucosamine 1-phosphate + UTP + H(+) = UDP-N-acetyl-alpha-D-glucosamine + diphosphate. It functions in the pathway nucleotide-sugar biosynthesis; UDP-N-acetyl-alpha-D-glucosamine biosynthesis; N-acetyl-alpha-D-glucosamine 1-phosphate from alpha-D-glucosamine 6-phosphate (route II): step 2/2. The protein operates within nucleotide-sugar biosynthesis; UDP-N-acetyl-alpha-D-glucosamine biosynthesis; UDP-N-acetyl-alpha-D-glucosamine from N-acetyl-alpha-D-glucosamine 1-phosphate: step 1/1. Its pathway is bacterial outer membrane biogenesis; LPS lipid A biosynthesis. Catalyzes the last two sequential reactions in the de novo biosynthetic pathway for UDP-N-acetylglucosamine (UDP-GlcNAc). The C-terminal domain catalyzes the transfer of acetyl group from acetyl coenzyme A to glucosamine-1-phosphate (GlcN-1-P) to produce N-acetylglucosamine-1-phosphate (GlcNAc-1-P), which is converted into UDP-GlcNAc by the transfer of uridine 5-monophosphate (from uridine 5-triphosphate), a reaction catalyzed by the N-terminal domain. This chain is Bifunctional protein GlmU, found in Francisella tularensis subsp. tularensis (strain FSC 198).